The primary structure comprises 634 residues: Hyphal wall protein 1 (634 aa).

Positions 1–27 (MRLSTAQLIAIAYYMLSIGATVPQVDG) are cleaved as a signal peptide. Disordered regions lie at residues 40 to 307 (SYDY…TTTT) and 412 to 570 (CPLT…SGAI). Residues 42 to 114 (DYYQEPCDDY…DYPQQPQEPC (73 aa)) are compositionally biased toward low complexity. The stretch at 46–58 (EPCDDYPQQQQQQ) is one 1; approximate repeat. The tract at residues 46 to 187 (EPCDDYPQQQ…PNIPTDWIPD (142 aa)) is 14 X 10 AA tandem repeats of [EVIQ]-P-[CDT]-D-[YNW]-P-[PQ]-[QI]-[QP]-[QDN]. Residues 59–69 (EPCDYPQQQQQ) form a 2; approximate repeat. Residues 70–81 (EEPCDYPQQQPQ) form a 3; approximate repeat. 9 repeat units span residues 82-91 (EPCDYPQQPQ), 92-101 (EPCDYPQQPQ), 102-111 (EPCDYPQQPQ), 112-121 (EPCDNPPQPD), 122-131 (VPCDNPPQPD), 132-141 (VPCDNPPQPD), 142-151 (VPCDNPPQPD), 152-161 (VPCDNPPQPD), and 162-171 (QPDDNPPIPN). Residues 115–171 (DNPPQPDVPCDNPPQPDVPCDNPPQPDVPCDNPPQPDVPCDNPPQPDQPDDNPPIPN) are compositionally biased toward pro residues. Residues 172–179 (IPTDWIPN) form a 13; truncated repeat. Composition is skewed to low complexity over residues 172–183 (IPTDWIPNIPTD) and 193–307 (TTPA…TTTT). The 14; truncated repeat unit spans residues 180–187 (IPTDWIPD). N241 and N286 each carry an N-linked (GlcNAc...) asparagine glycan. A compositionally biased stretch (polar residues) spans 415–426 (TENTPGTDSTPE). A compositionally biased stretch (low complexity) spans 508-550 (ETKPAAPKSSAPATEPSPVAPGTESAPAGPGASSSPKSSVLAS). N601 carries an N-linked (GlcNAc...) asparagine glycan. Residue G613 is the site of GPI-anchor amidated glycine attachment. Residues 614 to 634 (AGNNMRLTFGAAIIGIAAFLI) constitute a propeptide, removed in mature form.

It belongs to the HWP1 family. In terms of processing, the GPI-anchor is attached to the protein in the endoplasmic reticulum and serves to target the protein to the cell surface. There, the glucosamine-inositol phospholipid moiety is cleaved off and the GPI-modified mannoprotein is covalently attached via its lipidless GPI glycan remnant to the 1,6-beta-glucan of the outer cell wall layer. Post-translationally, serves as a substrate for mammalian transglutaminases which are necessary for cross-linking between HWP1 and host epithelial cells. Also predicted to be a substrate for cleavage by KEX2. N- and O-glycosylated.

It is found in the secreted. The protein localises to the cell wall. The protein resides in the membrane. In terms of biological role, major hyphal cell wall protein which plays a role of adhesin and is required for mating, normal hyphal development, cell-to-cell adhesive functions necessary for biofilm integrity, attachment to host, and virulence. Promotes interactions with host and bacterial molecules, thus leading to effective colonization within polymicrobial communities. Plays a crucial role in gastrointestinal colonization, in mucosal symptomatic and asymptomatic infections, in vaginitis, as well as in lethal oroesophageal candidiasis, caused by the combined action of fungal virulence factors and host inflammatory responses when protective immunity is absent. This Candida albicans (strain SC5314 / ATCC MYA-2876) (Yeast) protein is Hyphal wall protein 1 (HWP1).